The primary structure comprises 206 residues: Uridine kinase (206 aa).

9–16 (GGSGSGKT) lines the ATP pocket.

This sequence belongs to the uridine kinase family. In terms of assembly, monomer.

Its subcellular location is the cytoplasm. It carries out the reaction uridine + ATP = UMP + ADP + H(+). The enzyme catalyses cytidine + ATP = CMP + ADP + H(+). It functions in the pathway pyrimidine metabolism; CTP biosynthesis via salvage pathway; CTP from cytidine: step 1/3. It participates in pyrimidine metabolism; UMP biosynthesis via salvage pathway; UMP from uridine: step 1/1. This chain is Uridine kinase (udk), found in Borreliella burgdorferi (strain ATCC 35210 / DSM 4680 / CIP 102532 / B31) (Borrelia burgdorferi).